The primary structure comprises 340 residues: Immunoglobulin-binding protein 1 family member C (340 aa).

2 disordered regions span residues 223–243 and 292–340; these read KDSS…PPMK and PEEF…QNMG. Over residues 303–314 the composition is skewed to acidic residues; that stretch reads EDQEKEEEDDEQ. A compositionally biased stretch (basic and acidic residues) spans 318–330; sequence RAREWDDWKDTHP.

It belongs to the IGBP1/TAP42 family.

This is Immunoglobulin-binding protein 1 family member C from Homo sapiens (Human).